Reading from the N-terminus, the 491-residue chain is Cytosolic Fe-S cluster assembly factor NAR1 (491 aa).

Positions 20, 59, 62, 65, 177, 231, 412, and 416 each coordinate [4Fe-4S] cluster.

It belongs to the NARF family. In terms of assembly, interacts with CIA1.

The protein resides in the cytoplasm. The protein localises to the nucleus. Essential component of a cytosolic Fe/S protein assembly machinery. Required for maturation of extramitochondrial Fe/S proteins. May play a role in the transfer of pre-assembled Fe/S clusters to target apoproteins. The sequence is that of Cytosolic Fe-S cluster assembly factor NAR1 (NAR1) from Saccharomyces cerevisiae (strain ATCC 204508 / S288c) (Baker's yeast).